Here is a 360-residue protein sequence, read N- to C-terminus: Phosphoserine aminotransferase (360 aa).

R41 serves as a coordination point for L-glutamate. Pyridoxal 5'-phosphate contacts are provided by W101, T152, D172, and Q195. An N6-(pyridoxal phosphate)lysine modification is found at K196. 237 to 238 (NT) contacts pyridoxal 5'-phosphate.

It belongs to the class-V pyridoxal-phosphate-dependent aminotransferase family. SerC subfamily. In terms of assembly, homodimer. It depends on pyridoxal 5'-phosphate as a cofactor.

The protein resides in the cytoplasm. It catalyses the reaction O-phospho-L-serine + 2-oxoglutarate = 3-phosphooxypyruvate + L-glutamate. It carries out the reaction 4-(phosphooxy)-L-threonine + 2-oxoglutarate = (R)-3-hydroxy-2-oxo-4-phosphooxybutanoate + L-glutamate. It participates in amino-acid biosynthesis; L-serine biosynthesis; L-serine from 3-phospho-D-glycerate: step 2/3. Its pathway is cofactor biosynthesis; pyridoxine 5'-phosphate biosynthesis; pyridoxine 5'-phosphate from D-erythrose 4-phosphate: step 3/5. Functionally, catalyzes the reversible conversion of 3-phosphohydroxypyruvate to phosphoserine and of 3-hydroxy-2-oxo-4-phosphonooxybutanoate to phosphohydroxythreonine. This Burkholderia lata (strain ATCC 17760 / DSM 23089 / LMG 22485 / NCIMB 9086 / R18194 / 383) protein is Phosphoserine aminotransferase.